The sequence spans 432 residues: Casein kinase II subunit alpha-4, chloroplastic (432 aa).

The N-terminal 55 residues, 1–55 (MALRPCTGFTISSLRNASAANNNLFSLLSFSSSSPAKRNLLLSSLQDNLRRFASS), are a transit peptide targeting the chloroplast. Positions 63 to 83 (LRNQQQQHQQQQQSRVKEKSE) are disordered. Low complexity predominate over residues 66–75 (QQQQHQQQQQ). Residues 132 to 417 (YEVVRKVGRG…AKEAMAHPYF (286 aa)) form the Protein kinase domain. ATP is bound by residues 138 to 146 (VGRGKYSEV) and Lys161. Asp249 (proton acceptor) is an active-site residue.

Belongs to the protein kinase superfamily. Ser/Thr protein kinase family. CK2 subfamily. Tetramer of two alpha and two beta chains. In terms of tissue distribution, expressed in root tips, lateral root primordia, cotyledons, leaf primordia, sepals, filaments, stigma, and anthers.

The protein localises to the plastid. The protein resides in the chloroplast. The catalysed reaction is L-seryl-[protein] + ATP = O-phospho-L-seryl-[protein] + ADP + H(+). The enzyme catalyses L-threonyl-[protein] + ATP = O-phospho-L-threonyl-[protein] + ADP + H(+). Functionally, casein kinases are operationally defined by their preferential utilization of acidic proteins such as caseins as substrates. The alpha chain contains the catalytic site. Involved in the regulation of various developmental processes. Involved in the regulation of plant growth and flowering time. Involved in retrograde signaling in plant responses to abscisic acid (ABA) and heat stress. May act as an enhancing factor in abiotic stress signaling through modulation of the expression of some molecular players in retrograde signaling. Phosphorylates RuBisCo activase (RCA) at Thr-78. The polypeptide is Casein kinase II subunit alpha-4, chloroplastic (Arabidopsis thaliana (Mouse-ear cress)).